A 249-amino-acid polypeptide reads, in one-letter code: tRNA (guanine-N(1)-)-methyltransferase (249 aa).

S-adenosyl-L-methionine contacts are provided by residues G121 and 141-146 (LGDFVL).

Belongs to the RNA methyltransferase TrmD family. As to quaternary structure, homodimer.

It is found in the cytoplasm. It catalyses the reaction guanosine(37) in tRNA + S-adenosyl-L-methionine = N(1)-methylguanosine(37) in tRNA + S-adenosyl-L-homocysteine + H(+). In terms of biological role, specifically methylates guanosine-37 in various tRNAs. The protein is tRNA (guanine-N(1)-)-methyltransferase of Cereibacter sphaeroides (strain KD131 / KCTC 12085) (Rhodobacter sphaeroides).